The primary structure comprises 217 residues: Large ribosomal subunit protein uL3 (217 aa).

This sequence belongs to the universal ribosomal protein uL3 family. Part of the 50S ribosomal subunit. Forms a cluster with proteins L14 and L19.

One of the primary rRNA binding proteins, it binds directly near the 3'-end of the 23S rRNA, where it nucleates assembly of the 50S subunit. This Mycobacterium ulcerans (strain Agy99) protein is Large ribosomal subunit protein uL3.